The primary structure comprises 533 residues: MYLIFLLFFAASYSMSLSSADSVTIYEDFVQCFKNVTTISDIDLSDVVLPRTSISFTPTLRAYIRNARFNTSSMPKPSIIIVPRVDSHVQAAVICAKTLNLQLKIRSGGHDYDGLSYVSAVTFLVLDLSNFRNITVDLNDGGGSAWVQTGATLGELYYRIWEKSEVHAFPAGVCPTVGVGGHVSGGGYGHMIRKFGLTIDHVVDATIVDANGQIHDRKSMEEDLFWAIRGGGGGSFGVVLAFKVKLVTVPKTVTVFRVDKSVDENALDMVYKWQFVAPRTDPGLFMRVLLSSPTQNKTSTVNTKLRALYLGKADDVVLKMAEEFPELGLKKEDCKEMTWIQSLLWWMNHVDVDKVKPEILLEREPDSAKFLKRKSDYVEKEMTKPELNRLFQKLATLDRTGLVLNPYGGSLNVTAVNATAFPHRHKLYKIQHSVTWPDAGPEAERLYIGNLRTTYNIMTPFVSKNPRSSYLNYRDIDIGVNDHGADGYRKGEIYGRKYFGENFDRLVRVKTAVDPDNFFRNEQSIPTLPPNRR.

Residues 1–20 (MYLIFLLFFAASYSMSLSSA) form the signal peptide. A disulfide bridge connects residues C32 and C95. N-linked (GlcNAc...) asparagine glycosylation is found at N35, N70, N133, N296, N412, and N417. One can recognise an FAD-binding PCMH-type domain in the interval 73–249 (SMPKPSIIIV…LAFKVKLVTV (177 aa)). Residues 110-174 (HDYDGLSYVS…EVHAFPAGVC (65 aa)) constitute a cross-link (6-(S-cysteinyl)-8alpha-(pros-histidyl)-FAD (His-Cys)).

Belongs to the oxygen-dependent FAD-linked oxidoreductase family. FAD is required as a cofactor. The FAD cofactor is bound via a bicovalent 6-S-cysteinyl, 8alpha-N1-histidyl FAD linkage.

It localises to the secreted. The protein resides in the cell wall. This chain is Berberine bridge enzyme-like 12, found in Arabidopsis thaliana (Mouse-ear cress).